We begin with the raw amino-acid sequence, 127 residues long: Large ribosomal subunit protein bL17 (127 aa).

This sequence belongs to the bacterial ribosomal protein bL17 family. Part of the 50S ribosomal subunit. Contacts protein L32.

The protein is Large ribosomal subunit protein bL17 of Xanthomonas oryzae pv. oryzae (strain KACC10331 / KXO85).